Consider the following 201-residue polypeptide: dCTP deaminase, dUMP-forming (201 aa).

DCTP-binding positions include K101–R106, D119, T127–E129, Q148, Y162, and Q174. E129 serves as the catalytic Proton donor/acceptor.

It belongs to the dCTP deaminase family. In terms of assembly, homotrimer.

It catalyses the reaction dCTP + 2 H2O = dUMP + NH4(+) + diphosphate. The protein operates within pyrimidine metabolism; dUMP biosynthesis; dUMP from dCTP: step 1/1. In terms of biological role, bifunctional enzyme that catalyzes both the deamination of dCTP to dUTP and the hydrolysis of dUTP to dUMP without releasing the toxic dUTP intermediate. The chain is dCTP deaminase, dUMP-forming from Parafrankia sp. (strain EAN1pec).